Consider the following 612-residue polypeptide: MAFNNFTRLDAHSAAEKAVSVIGLGYDLCSDVRFSACKTTPDGSRLVEIDPTRNRDLIFPGGIVVNNVSSSIKCDKGERTRLRSDILSFNQMSEKFNQDMCLSGKIPSGMFNNMFAFSKCWPKDASSVKTLAYDGWFISLYSVEIVRKQLTLRDEVKREVPSSWDSAALAGFIEKYGTHVVVGVTMGGKDVIHVKQMRKSNHEPEEIQKMLKHWGDERFCVDPVESKSPASVYSGKPKEENLLQWGLQPFGTSVSSAVVMHTKNEEIMRVCIRRGGVDLGQSHERWLSTVSQAPNVISMCFVPITSLLSGLPGTGFLSHAVNLYLRYKPPIEELHQFLEFQLPRQWAPVYGDLPLGLRRSKQSSPSLQFSLMGPKLYVNTSKVDSGERPVTGLRFFLEGKKGNHLAIHLQHLSACPPSLHLSHDDTYEPIEEPVEKGYYVPVKWGIFSHVCTYPVQYNGARSDDTASIVTKAWLEVKGMGMRKVLFLRLGFSLDASAVTRKSCWDNLSTNSRKSGVFSMISTRLSTGLSPNPATTKPQSKIDINSAVYPRGPSPPVKPKLLSLVDTKEVMRGPEEQPGYWVVTGAKLCVEAGKISIKAKYSLLTVISEDSLV.

An MACPF domain is found at 5-338; the sequence is NFTRLDAHSA…PPIEELHQFL (334 aa).

It belongs to the complement C6/C7/C8/C9 (TC 1.C.39) family.

Functionally, negatively controls the salicylic acid (SA)-mediated pathway of programmed cell death in plant immunity. The protein is MACPF domain-containing protein NSL1 (NSL1) of Arabidopsis thaliana (Mouse-ear cress).